Reading from the N-terminus, the 542-residue chain is ATP synthase subunit alpha (542 aa).

173–180 is a binding site for ATP; sequence GDRQTGKT. A disordered region spans residues 518–542; the sequence is PLVEKKPDEKHTTPVEQEKIVAGEK. Residues 519-542 are compositionally biased toward basic and acidic residues; that stretch reads LVEKKPDEKHTTPVEQEKIVAGEK.

Belongs to the ATPase alpha/beta chains family. In terms of assembly, F-type ATPases have 2 components, CF(1) - the catalytic core - and CF(0) - the membrane proton channel. CF(1) has five subunits: alpha(3), beta(3), gamma(1), delta(1), epsilon(1). CF(0) has three main subunits: a(1), b(2) and c(9-12). The alpha and beta chains form an alternating ring which encloses part of the gamma chain. CF(1) is attached to CF(0) by a central stalk formed by the gamma and epsilon chains, while a peripheral stalk is formed by the delta and b chains.

It localises to the cell membrane. It catalyses the reaction ATP + H2O + 4 H(+)(in) = ADP + phosphate + 5 H(+)(out). In terms of biological role, produces ATP from ADP in the presence of a proton gradient across the membrane. The alpha chain is a regulatory subunit. This Bifidobacterium adolescentis (strain ATCC 15703 / DSM 20083 / NCTC 11814 / E194a) protein is ATP synthase subunit alpha.